A 214-amino-acid polypeptide reads, in one-letter code: Nucleoside triphosphate pyrophosphatase (214 aa).

The active-site Proton acceptor is the Asp-79.

Belongs to the Maf family. Requires a divalent metal cation as cofactor.

The protein resides in the cytoplasm. It catalyses the reaction a ribonucleoside 5'-triphosphate + H2O = a ribonucleoside 5'-phosphate + diphosphate + H(+). The catalysed reaction is a 2'-deoxyribonucleoside 5'-triphosphate + H2O = a 2'-deoxyribonucleoside 5'-phosphate + diphosphate + H(+). In terms of biological role, nucleoside triphosphate pyrophosphatase. May have a dual role in cell division arrest and in preventing the incorporation of modified nucleotides into cellular nucleic acids. This is Nucleoside triphosphate pyrophosphatase from Rhodococcus jostii (strain RHA1).